The chain runs to 397 residues: Chorismate synthase (397 aa).

Positions 40 and 46 each coordinate NADP(+). FMN is bound by residues 129-131 (RSS), 257-258 (QA), Gly302, 317-321 (KPISS), and Arg343.

This sequence belongs to the chorismate synthase family. As to quaternary structure, homotetramer. FMNH2 serves as cofactor.

It catalyses the reaction 5-O-(1-carboxyvinyl)-3-phosphoshikimate = chorismate + phosphate. It participates in metabolic intermediate biosynthesis; chorismate biosynthesis; chorismate from D-erythrose 4-phosphate and phosphoenolpyruvate: step 7/7. In terms of biological role, catalyzes the anti-1,4-elimination of the C-3 phosphate and the C-6 proR hydrogen from 5-enolpyruvylshikimate-3-phosphate (EPSP) to yield chorismate, which is the branch point compound that serves as the starting substrate for the three terminal pathways of aromatic amino acid biosynthesis. This reaction introduces a second double bond into the aromatic ring system. In Chlorobium luteolum (strain DSM 273 / BCRC 81028 / 2530) (Pelodictyon luteolum), this protein is Chorismate synthase.